The sequence spans 277 residues: MKKTQRKEIENVTNITGVRQIELWRRDDLQHPRLDEVAEEVPVALVYNGISHVVMMASPKDLEYFALGFSLSEGIIESPRDIFGMDVVPSCNGLEVQIELSSRRFMGLKERRRALAGRTGCGVCGVEQLNDIGKPVQPLPFTQTFDLNKLDDALRHLNDFQPVGQLTGCTHAAAWMLPSGELVGGHEDVGRHVALDKLLGRRSQEGESWQQGAVLVSSRASYEMVQKSAMCGVEILFAVSAATTLAVEVAERCNLTLVGFCKPGRATVYTHPQRLSN.

The Cysteine persulfide intermediate role is filled by cysteine 121. 260–265 is a binding site for Mo-bis(molybdopterin guanine dinucleotide); it reads FCKPGR.

The protein belongs to the FdhD family.

The protein resides in the cytoplasm. Its function is as follows. Required for formate dehydrogenase (FDH) activity. Acts as a sulfur carrier protein that transfers sulfur from IscS to the molybdenum cofactor prior to its insertion into FDH. The polypeptide is Sulfur carrier protein FdhD (Escherichia coli O8 (strain IAI1)).